A 693-amino-acid chain; its full sequence is Tegument protein UL47 (693 aa).

Disordered regions lie at residues 1-32 (MSAR…DGVG) and 48-126 (ELEA…GYLG). The segment covering 48–57 (ELEALEEMAG) has biased composition (acidic residues). Residues 50-75 (EALEEMAGDEPPVRRRREGPRARRRR) are RNA-binding. Positions 63–75 (RRRREGPRARRRR) match the Nuclear localization signal motif. The span at 63–75 (RRRREGPRARRRR) shows a compositional bias: basic residues. A Nuclear export signal motif is present at residues 647 to 670 (SVLGPGVRVVDIMSQFRKLLMGDE).

This sequence belongs to the alphaherpesvirinae HHV-1 UL47 family. As to quaternary structure, interacts with US3 kinase. Interacts with UL31 and UL34; these interactions seem important for efficient virion nuclear egress. Interacts with UL41/VHS. Post-translationally, phosphorylated by US3. This phosphorylation is required for proper nuclear localization.

The protein localises to the virion tegument. The protein resides in the host nucleus. It is found in the host cytoplasm. Functionally, tegument protein that can bind to various RNA transcripts. Plays a role in the attenuation of selective viral and cellular mRNA degradation by modulating the activity of host shutoff RNase UL41/VHS. Also plays a role in the primary envelopment of virions in the perinuclear space, probably by interacting with two nuclear egress proteins UL31 and UL34. This Human herpesvirus 1 (strain F) (HHV-1) protein is Tegument protein UL47.